A 450-amino-acid polypeptide reads, in one-letter code: uncharacterized protein (450 aa).

The span at 141–151 shows a compositional bias: basic and acidic residues; it reads WLDKTDGEKNS. Disordered stretches follow at residues 141–171, 276–298, and 395–416; these read WLDKTDGEKNSEASSTDNSLENSTKGADSAG, LQDSENVQGDKGEKESKDDAVSQ, and DDEDEDNVDNSEGDEESLLSRN. Residues 152 to 171 show a composition bias toward polar residues; sequence EASSTDNSLENSTKGADSAG. Residues 283–298 show a composition bias toward basic and acidic residues; the sequence is QGDKGEKESKDDAVSQ. The span at 395-411 shows a compositional bias: acidic residues; that stretch reads DDEDEDNVDNSEGDEES.

This is an uncharacterized protein from Saccharomyces cerevisiae (strain ATCC 204508 / S288c) (Baker's yeast).